The sequence spans 449 residues: Glucose-6-phosphate isomerase (449 aa).

Glu-291 serves as the catalytic Proton donor. Residues His-312 and Lys-426 contribute to the active site.

It belongs to the GPI family.

Its subcellular location is the cytoplasm. It carries out the reaction alpha-D-glucose 6-phosphate = beta-D-fructose 6-phosphate. The protein operates within carbohydrate biosynthesis; gluconeogenesis. Its pathway is carbohydrate degradation; glycolysis; D-glyceraldehyde 3-phosphate and glycerone phosphate from D-glucose: step 2/4. Catalyzes the reversible isomerization of glucose-6-phosphate to fructose-6-phosphate. This is Glucose-6-phosphate isomerase from Streptococcus pneumoniae serotype 19F (strain G54).